Reading from the N-terminus, the 150-residue chain is Placenta-specific protein 4 (150 aa).

Expressed in placental syncytiotrophoblast and choriocarcinoma cells.

This Homo sapiens (Human) protein is Placenta-specific protein 4 (PLAC4).